Here is a 325-residue protein sequence, read N- to C-terminus: Xylosidase/arabinosidase (325 aa).

Catalysis depends on D16, which acts as the Proton acceptor. E224 acts as the Proton donor in catalysis.

It belongs to the glycosyl hydrolase 43 family.

The catalysed reaction is Hydrolysis of (1-&gt;4)-beta-D-xylans, to remove successive D-xylose residues from the non-reducing termini.. It carries out the reaction Hydrolysis of terminal non-reducing alpha-L-arabinofuranoside residues in alpha-L-arabinosides.. The polypeptide is Xylosidase/arabinosidase (xsa) (Bacteroides ovatus).